We begin with the raw amino-acid sequence, 302 residues long: MDQNNSLPPYAQGLASPQGAMTPGIPIFSPMMPYGTGLTPQPVQSTNSLSILEEQQRQQQQQQAAQSSTSQQATQGTSGQTPQLFHSQTLTTAPLPGTTPLYPSPMTPMTPITPATPASESSGIVPQLQNIVSTVNLGCKLDLKTIALRARNAEYNPKRFAAVIMRIREPRTTALIFSSGKMVCTGAKSEEQSRLAARKYARVVQKLGFPAKFLDFKIQNMVGSCDVKFPIRLEGLVLTHQQFSSYEPELFPGLIYRMIKPRIVLLIFVSGKVVLTGAKVRAEIYEAFENIYPILKGFRKTT.

Disordered regions lie at residues Met1 to Ala20 and Glu53 to Ser121. Composition is skewed to low complexity over residues Arg57–Thr81, Thr89–Leu101, and Met109–Ser119. 2 tandem repeats follow at residues Leu128–Val204 and Ile218–Leu295.

Belongs to the TBP family. In terms of assembly, belongs to the TFIID complex together with the TBP-associated factors (TAFs). Binds DNA as monomer.

The protein resides in the nucleus. Its function is as follows. General transcription factor that functions at the core of the DNA-binding multiprotein factor TFIID. Binding of TFIID to the TATA box is the initial transcriptional step of the pre-initiation complex (PIC), playing a role in the activation of eukaryotic genes transcribed by RNA polymerase II. The protein is TATA-box-binding protein (TBP) of Gallus gallus (Chicken).